The following is a 138-amino-acid chain: Basic phospholipase A2 homolog ammodytin L (138 aa).

An N-terminal signal peptide occupies residues 1-16; that stretch reads MRILWIVAVCLIGVEG. Disulfide bonds link Cys-42–Cys-131, Cys-44–Cys-60, Cys-59–Cys-111, Cys-65–Cys-138, Cys-66–Cys-104, Cys-73–Cys-97, and Cys-91–Cys-102. The tract at residues 121–133 is important for membrane-damaging activities in eukaryotes and bacteria; heparin-binding; that stretch reads KKYKVYLRFKCKG.

It belongs to the phospholipase A2 family. Group II subfamily. S49 sub-subfamily. Expressed by the venom gland.

It localises to the secreted. Functionally, snake venom phospholipase A2 homolog that lacks enzymatic activity. Is very active in inducing myonecrosis in vivo and shows a potent calcium-independent membrane-damaging activity in vitro, most probably by binding and incorporating in the membrane. Also acts as a presynaptic neurotoxin. A model of myotoxic mechanism has been proposed: an apo Lys49-PLA2 is activated by the entrance of a hydrophobic molecule (e.g. fatty acid) at the hydrophobic channel of the protein leading to a reorientation of a monomer. This reorientation causes a transition between 'inactive' to 'active' states, causing alignment of C-terminal and membrane-docking sites (MDoS) side-by-side and putting the membrane-disruption sites (MDiS) in the same plane, exposed to solvent and in a symmetric position for both monomers. The MDoS region stabilizes the toxin on membrane by the interaction of charged residues with phospholipid head groups. Subsequently, the MDiS region destabilizes the membrane with penetration of hydrophobic residues. This insertion causes a disorganization of the membrane, allowing an uncontrolled influx of ions (i.e. calcium and sodium), and eventually triggering irreversible intracellular alterations and cell death. The protein is Basic phospholipase A2 homolog ammodytin L of Vipera ammodytes ammodytes (Western sand viper).